We begin with the raw amino-acid sequence, 239 residues long: SH3 domain-binding glutamic acid-rich protein (239 aa).

An SH3-binding motif is present at residues 124 to 130; the sequence is NGIPLPP. Residues 159-239 form a disordered region; that stretch reads GLAPPPDSKG…GEEPGEDEDS (81 aa). The span at 167 to 185 shows a compositional bias: basic and acidic residues; it reads KGSEKAEEGGETEAQKEGS. The span at 198 to 239 shows a compositional bias: acidic residues; sequence NEEEGETATEETEEIAMEGAEGEAEEEEETAEGEEPGEDEDS.

Belongs to the SH3BGR family. Expressed in heart and skeletal muscle.

The chain is SH3 domain-binding glutamic acid-rich protein (SH3BGR) from Homo sapiens (Human).